A 1164-amino-acid chain; its full sequence is Toxin subunit YenA1 (1164 aa).

The segment at 106-131 (RLEKSNSPLVPQTSSSTDASSESQTN) is disordered. The segment covering 118–130 (TSSSTDASSESQT) has biased composition (low complexity).

As to quaternary structure, semipurified toxin complex consists of at least YenA1, YenA2, YenB, YenC1, YenC2, Chi1 and Chi2. The Yen-TC:K9 subcomplex is about 26 nm tall and 22 nm in diameter with 5-fold symmetry and 5 copies of YenA1, YenA2, Chi1 and Chi2; the chitinase subunits may be solvent accessible on the exterior the complex. The Yen-TC:K9 subcomplex has no insecticidal activity. The native complex with additional YenB, YenC1 and YenC2 subunits is 16 nm taller and is insecticidal; the toxicity-conferring subunits are present at about 1 copy each.

The protein resides in the secreted. Its activity is regulated as follows. Toxin complex is secreted when grown at 25 degrees Celsius or less; at higher temperatures the proteins are present intracellularly but not secreted. Functionally, part of an orally active toxin complex (TC) with strong insecticidal effects on larvae of the Coleoptera Costelytra zealandica, Acrossidius tasmania and Adoryphorus couloni and some Lepidoptera larvae. The TC has an endochitinase activity. This Yersinia entomophaga protein is Toxin subunit YenA1.